The chain runs to 305 residues: MLDTSIQELIDKWQKYLDLQRNYSNHTVISYNNDLKHFLEFMNYYNSELVTINHIKTADIRLIRSWLAKRNCDNFTTSSISRGLSAVKNFYRFLEKTTQLNSHIIFSIKSPKKTKLLPKALSEDDVVISLEHIEEYGNVKWVELRNKALLVLIYASGLRISEALSITKLHLQNLEFIRIIGKGSKERIIPWLPIAKNLITQYLEILPYKLGDNEPIFRGKQGKKLQPPVFNRELIKLKHFYGLPQHLTAHSFRHSFASHLLEHGADLRSIQELLGHKSLSTTQNYTKTSIKHLEAVYTTAYPIKK.

Positions Thr4–Glu95 constitute a Core-binding (CB) domain. Positions Leu116–Thr298 constitute a Tyr recombinase domain. Active-site residues include Arg159, Lys182, His250, Arg253, and His276. The active-site O-(3'-phospho-DNA)-tyrosine intermediate is the Tyr285.

This sequence belongs to the 'phage' integrase family. XerC subfamily. Forms a cyclic heterotetrameric complex composed of two molecules of XerC and two molecules of XerD.

The protein localises to the cytoplasm. Functionally, site-specific tyrosine recombinase, which acts by catalyzing the cutting and rejoining of the recombining DNA molecules. The XerC-XerD complex is essential to convert dimers of the bacterial chromosome into monomers to permit their segregation at cell division. It also contributes to the segregational stability of plasmids. In Rickettsia felis (strain ATCC VR-1525 / URRWXCal2) (Rickettsia azadi), this protein is Tyrosine recombinase XerC.